The primary structure comprises 750 residues: uncharacterized protein (750 aa).

18 N-linked (GlcNAc...) asparagine glycosylation sites follow: asparagine 61, asparagine 84, asparagine 115, asparagine 154, asparagine 176, asparagine 197, asparagine 207, asparagine 228, asparagine 241, asparagine 267, asparagine 293, asparagine 299, asparagine 312, asparagine 335, asparagine 351, asparagine 373, asparagine 389, and asparagine 519. Phosphoserine occurs at positions 675 and 678. Residue lysine 697 forms a Glycyl lysine isopeptide (Lys-Gly) (interchain with G-Cter in ubiquitin) linkage. Polar residues-rich tracts occupy residues 703–726 (EITA…SNRT) and 736–750 (KDSN…HLVA). The disordered stretch occupies residues 703–750 (EITAIDNSSSANNTDVTGSTSNRTELSHPDVTPKDSNGPVNNNAHLVA). 3 N-linked (GlcNAc...) asparagine glycosylation sites follow: asparagine 709, asparagine 714, and asparagine 724.

N-glycosylated.

The protein localises to the mitochondrion. This is an uncharacterized protein from Saccharomyces cerevisiae (strain ATCC 204508 / S288c) (Baker's yeast).